The chain runs to 103 residues: Co-chaperonin GroES (103 aa).

The protein belongs to the GroES chaperonin family. In terms of assembly, heptamer of 7 subunits arranged in a ring. Interacts with the chaperonin GroEL.

It localises to the cytoplasm. Functionally, together with the chaperonin GroEL, plays an essential role in assisting protein folding. The GroEL-GroES system forms a nano-cage that allows encapsulation of the non-native substrate proteins and provides a physical environment optimized to promote and accelerate protein folding. GroES binds to the apical surface of the GroEL ring, thereby capping the opening of the GroEL channel. The sequence is that of Co-chaperonin GroES from Trichodesmium erythraeum (strain IMS101).